Consider the following 134-residue polypeptide: Putative F-box protein R638 (134 aa).

The 48-residue stretch at 5–52 (NIMNLLNEDCILHILSFLADKDKIQLSLSCKSNLKFLHKTIYDDIYFY) folds into the F-box domain.

This Acanthamoeba polyphaga mimivirus (APMV) protein is Putative F-box protein R638.